Reading from the N-terminus, the 540-residue chain is Chaperonin GroEL (540 aa).

ATP-binding positions include 29–32, 86–90, Gly413, and Asp493; these read TLGP and DGTTT. The interval 520 to 540 is disordered; that stretch reads AEKPEPKPAPGPADPGAGMDF.

The protein belongs to the chaperonin (HSP60) family. Forms a cylinder of 14 subunits composed of two heptameric rings stacked back-to-back. Interacts with the co-chaperonin GroES.

It localises to the cytoplasm. It catalyses the reaction ATP + H2O + a folded polypeptide = ADP + phosphate + an unfolded polypeptide.. Functionally, together with its co-chaperonin GroES, plays an essential role in assisting protein folding. The GroEL-GroES system forms a nano-cage that allows encapsulation of the non-native substrate proteins and provides a physical environment optimized to promote and accelerate protein folding. This is Chaperonin GroEL from Tropheryma whipplei (Whipple's bacillus).